The chain runs to 780 residues: Pendrin (780 aa).

The Cytoplasmic portion of the chain corresponds to 1–87 (MAARDRRSEP…YRVKEWLLSD (87 aa)). Residues 88–108 (IISGVSTGLVGTLQGMAYALL) traverse the membrane as a helical segment. Position 109 (A109) is a topological domain, extracellular. A helical transmembrane segment spans residues 110 to 130 (AVPVQYGLYSAFFPILTYFVF). Residues 131-135 (GTSRH) are Cytoplasmic-facing. Residues 136–156 (ISVGPFPVVSLMVGSVVLSMA) traverse the membrane as a helical segment. The Extracellular segment spans residues 157-191 (PDDHFLVPSGNGSTLNTTTLDTGTRDAARVLLAST). Residues 192-212 (LTLLVGIIQLVFGGLQIGFIV) form a helical membrane-spanning segment. The Cytoplasmic portion of the chain corresponds to 213-218 (RYLADP). Residues 219-239 (LVGGFTTAAAFQVLVSQLKIV) form a helical membrane-spanning segment. At 240-263 (LNVSTKNYNGVLSIIYTLIEIFQN) the chain is on the extracellular side. The helical transmembrane segment at 264-284 (IGDTNIADFIAGLLTIIVCMA) threads the bilayer. Residues 285–295 (VKELNDRFKHK) lie on the Cytoplasmic side of the membrane. A helical transmembrane segment spans residues 296 to 316 (IPVPIPIEVIVTIIATAISYG). The Extracellular portion of the chain corresponds to 317–344 (ANLEANYNAGIVKSIPSGFLPPVLPSVG). Residues 345-365 (LFSDMLAASFSIAVVAYAIAV) traverse the membrane as a helical segment. Residues 366-384 (SVGKVYATKHDYIIDGNQE) lie on the Cytoplasmic side of the membrane. Residues 385–405 (FIAFGISNVFSGFFSCFVATT) traverse the membrane as a helical segment. Over 406-421 (ALSRTAVQESTGGKTQ) the chain is Extracellular. A helical membrane pass occupies residues 422–442 (VAGLISAVIVMVAIVALGKLL). Residues 443 to 448 (EPLQKS) lie on the Cytoplasmic side of the membrane. Residues 449-469 (VLAAVVIANLKGMFMQVCDVP) form a helical membrane-spanning segment. Residues 470–486 (RLWKQNKTDAVIWVFTC) are Extracellular-facing. Residues 487 to 507 (IMSIILGLDLGLLAGLLFGLL) form a helical membrane-spanning segment. The Cytoplasmic portion of the chain corresponds to 508–780 (TVVLRVQFPS…QDEAMRRLAS (273 aa)). Residues 535 to 729 (HYKNLEEPEG…LTVHDAILYL (195 aa)) form the STAS domain.

This sequence belongs to the SLC26A/SulP transporter (TC 2.A.53) family. Highly expressed in the kidney (at protein level).

The protein localises to the cell membrane. It localises to the apical cell membrane. The catalysed reaction is chloride(in) = chloride(out). The enzyme catalyses iodide(out) = iodide(in). It catalyses the reaction hydrogencarbonate(in) + chloride(out) = hydrogencarbonate(out) + chloride(in). It carries out the reaction iodide(in) + hydrogencarbonate(out) = iodide(out) + hydrogencarbonate(in). The catalysed reaction is iodide(in) + chloride(out) = iodide(out) + chloride(in). The enzyme catalyses formate(in) + chloride(out) = formate(out) + chloride(in). Sodium-independent transporter of chloride and iodide. Mediates electroneutral chloride-bicarbonate and chloride-formate exchange with 1:1 stoichiometry. Mediates electroneutral iodide-chloride and iodide-bicarbonate exchange. This chain is Pendrin (Slc26a4), found in Rattus norvegicus (Rat).